A 128-amino-acid chain; its full sequence is UPF0102 protein Mext_0406 (128 aa).

The protein belongs to the UPF0102 family.

The protein is UPF0102 protein Mext_0406 of Methylorubrum extorquens (strain PA1) (Methylobacterium extorquens).